The primary structure comprises 376 residues: tRNA-specific 2-thiouridylase MnmA (376 aa).

Residues 16–23 (AMSGGVDS) and Leu-42 contribute to the ATP site. The active-site Nucleophile is Cys-111. Residues Cys-111 and Cys-210 are joined by a disulfide bond. Gly-135 is an ATP binding site. The interval 158–160 (KDQ) is interaction with tRNA. Cys-210 functions as the Cysteine persulfide intermediate in the catalytic mechanism.

Belongs to the MnmA/TRMU family.

The protein localises to the cytoplasm. It carries out the reaction S-sulfanyl-L-cysteinyl-[protein] + uridine(34) in tRNA + AH2 + ATP = 2-thiouridine(34) in tRNA + L-cysteinyl-[protein] + A + AMP + diphosphate + H(+). Catalyzes the 2-thiolation of uridine at the wobble position (U34) of tRNA, leading to the formation of s(2)U34. The polypeptide is tRNA-specific 2-thiouridylase MnmA (Streptomyces avermitilis (strain ATCC 31267 / DSM 46492 / JCM 5070 / NBRC 14893 / NCIMB 12804 / NRRL 8165 / MA-4680)).